Consider the following 139-residue polypeptide: Protein COLD-REGULATED 15A, chloroplastic (139 aa).

The N-terminal 40 residues, 1–40, are a transit peptide targeting the chloroplast; sequence MAMSFSGAVLTGMASSFHSGAKQSSFGAVRVGQKTQFVVV.

This sequence belongs to the COR15 protein family. Forms homooligomers which interact with potential stromal substrates in the stroma of chloroplasts. Interacts with the galactose headgroup of the chloroplast lipid monogalactosyldiacylglycerol (MGDG).

It is found in the plastid. Its subcellular location is the chloroplast stroma. In terms of biological role, exhibits cryoprotective activity toward stromal substrates (e.g. LDH and rubisco) in chloroplasts and in protoplasts and confers freezing tolerance to plants in a CBF-dependent manner. Protectant against various stresses (e.g. cold, drought and heat stress) by preventing protein aggregation (e.g. LDH) and attenuating enzyme inactivation. Influences the intrinsic curvature of the inner membrane of the chloroplast envelope, and modulates the freeze-induced lamellar-to-hexagonal II phase transitions that occur in regions where the plasma membrane is brought into close apposition with the chloroplast envelope during freeze-induced osmotic contraction. Mediates a shift in the melting curves of phospholipids-containing membranes to lower temperatures. Involved in the regulation of leaf senescence by abscisic acid (ABA) in a VNI2-dependent manner. This chain is Protein COLD-REGULATED 15A, chloroplastic, found in Arabidopsis thaliana (Mouse-ear cress).